A 415-amino-acid chain; its full sequence is Ribulose bisphosphate carboxylase/oxygenase activase (415 aa).

Gly37–Thr44 is an ATP binding site.

This sequence belongs to the RuBisCO activase family.

Its function is as follows. Activation of RuBisCO (ribulose-1,5-bisohosphate carboxylase/oxygenase; EC 4.1.1.39) involves the ATP-dependent carboxylation of the epsilon-amino group of lysine leading to a carbamate structure. In Anabaena sp. (strain CA / ATCC 33047), this protein is Ribulose bisphosphate carboxylase/oxygenase activase (rca).